Reading from the N-terminus, the 198-residue chain is DnaJ homolog subfamily C member 5 (198 aa).

Phosphoserine occurs at positions 8, 10, 12, and 15. One can recognise a J domain in the interval 13–82 (GESLYHVLGL…RNIYDKYGSL (70 aa)). Tyrosine 17 is subject to Phosphotyrosine. Lysine 56 carries the N6-acetyllysine modification. The residue at position 151 (serine 151) is a Phosphoserine.

In terms of assembly, homodimer. Interacts with the chaperone complex consisting of HSC70 and SGTA. Interacts with ZDHHC13 (via ANK repeats). Interacts with ZDHHC17 (via ANK repeats). Interacts with SYT1, SYT5 and SYT7, and with SYT9, forming a complex with SNAP25. The interaction with SYT9 is stimulated tenfold in presence of calcium. Post-translationally, formation of the chaperone complex DNAJC5/HSC70 is not regulated by phosphorylation. Ser-10 phosphorylation induces an order-to-disorder transition triggering the interaction with Lys-58. This conformational switch modulates DNAJC5's cellular functions by reducing binding to syntaxin and synaptogamin without altering HSC70 interactions. In terms of processing, palmitoylated. Could be palmitoylated by DHHC3, DHHC7, DHHC15 and DHHC17. Palmitoylation occurs probably in the cysteine-rich domain and regulates DNAJC5 membrane attachment.

The protein resides in the cytoplasm. The protein localises to the cytosol. It is found in the membrane. Its subcellular location is the cytoplasmic vesicle. It localises to the secretory vesicle. The protein resides in the chromaffin granule membrane. The protein localises to the melanosome. It is found in the cell membrane. Acts as a co-chaperone for the SNARE protein SNAP-25. Involved in the calcium-mediated control of a late stage of exocytosis. Acts as a general chaperone in regulated exocytosis. May have an important role in presynaptic function. May be involved in calcium-dependent neurotransmitter release at nerve endings. The polypeptide is DnaJ homolog subfamily C member 5 (Mus musculus (Mouse)).